Here is a 272-residue protein sequence, read N- to C-terminus: MKKLTSILSLIVLVILAIWQYFTDTTKTKHQSSSPVIEQTKQTKVSEPKFEPKFEPKFEPKFEPQFETKRTDIEKSAVKNPDVFANYDVIMRNDHIGQNAKAPVDYYMLALSWSPGFCDIQREKYGDQLPYSSQYQCGNNRTFGWVVHGLWPQNANARAVSDHPRFCKGDLPALPKGLLAQYLAISPGEKLLQGEWEKHGSCAFDSAQQYFAKEQELFNALKLPNQKLSRDELFGWMKQHNPQLKNAYLRASRNELFICYDKKWQVMNCQSK.

The N-terminal stretch at 1 to 23 (MKKLTSILSLIVLVILAIWQYFT) is a signal peptide. Catalysis depends on residues His148, Glu195, and His199.

It belongs to the RNase T2 family.

In Haemophilus influenzae (strain ATCC 51907 / DSM 11121 / KW20 / Rd), this protein is Probable ribonuclease HI_0526.